A 366-amino-acid chain; its full sequence is Probable quinol oxidase subunit 2 (366 aa).

A signal peptide spans 1 to 19 (MSKFKSLLLLFGTLILLSG). C20 carries the N-palmitoyl cysteine lipid modification. The S-diacylglycerol cysteine moiety is linked to residue C20. The next 2 helical transmembrane spans lie at 38-58 (FLIL…LGMF) and 80-100 (AIIE…LAIP). A disordered region spans residues 330-366 (EPYNNEFKKDESKNAKEMKKISKDAQDQDNDDHGGGH). Basic and acidic residues predominate over residues 335–366 (EFKKDESKNAKEMKKISKDAQDQDNDDHGGGH).

The protein belongs to the cytochrome c oxidase subunit 2 family.

It localises to the cell membrane. It catalyses the reaction 2 a quinol + O2 = 2 a quinone + 2 H2O. Its function is as follows. Catalyzes quinol oxidation with the concomitant reduction of oxygen to water. Subunit II transfers the electrons from a quinol to the binuclear center of the catalytic subunit I. The chain is Probable quinol oxidase subunit 2 (qoxA) from Staphylococcus aureus (strain bovine RF122 / ET3-1).